A 242-amino-acid polypeptide reads, in one-letter code: UPF0273 protein MJ1359 (242 aa).

The 241-residue stretch at 2 to 242 folds into the KaiC domain; it reads KRVKTGIPGM…VYPDKVLKLR (241 aa). ATP is bound at residue 29 to 36; it reads GGPGTGKS.

Belongs to the UPF0273 family.

This Methanocaldococcus jannaschii (strain ATCC 43067 / DSM 2661 / JAL-1 / JCM 10045 / NBRC 100440) (Methanococcus jannaschii) protein is UPF0273 protein MJ1359.